Reading from the N-terminus, the 150-residue chain is Macrodomain Ter protein (150 aa).

This sequence belongs to the MatP family. In terms of assembly, homodimer.

It localises to the cytoplasm. Its function is as follows. Required for spatial organization of the terminus region of the chromosome (Ter macrodomain) during the cell cycle. Prevents early segregation of duplicated Ter macrodomains during cell division. Binds specifically to matS, which is a 13 bp signature motif repeated within the Ter macrodomain. The chain is Macrodomain Ter protein from Salmonella typhi.